The primary structure comprises 485 residues: Glutamate--tRNA ligase 1 (485 aa).

The 'HIGH' region motif lies at 10-20; it reads PSPTGAIHIGN. Residues 252–256 carry the 'KMSKS' region motif; the sequence is KLSKR. Lysine 255 is an ATP binding site.

The protein belongs to the class-I aminoacyl-tRNA synthetase family. Glutamate--tRNA ligase type 1 subfamily. In terms of assembly, monomer.

Its subcellular location is the cytoplasm. It carries out the reaction tRNA(Glu) + L-glutamate + ATP = L-glutamyl-tRNA(Glu) + AMP + diphosphate. Functionally, catalyzes the attachment of glutamate to tRNA(Glu) in a two-step reaction: glutamate is first activated by ATP to form Glu-AMP and then transferred to the acceptor end of tRNA(Glu). This chain is Glutamate--tRNA ligase 1, found in Thermoanaerobacter sp. (strain X514).